A 368-amino-acid chain; its full sequence is F-box only protein 28 (368 aa).

The segment covering 1–11 (MAAAAEERMAE) has biased composition (basic and acidic residues). Residues 1-56 (MAAAAEERMAEEGGGGQGDGGSSLASGSTQRQPPPPAPQHPQPGSQALPAPALAPD) are disordered. Residues 12–21 (EGGGGQGDGG) are compositionally biased toward gly residues. Residues 22 to 31 (SSLASGSTQR) show a composition bias toward low complexity. Over residues 32–41 (QPPPPAPQHP) the composition is skewed to pro residues. Low complexity predominate over residues 42 to 56 (QPGSQALPAPALAPD). The F-box domain occupies 61–109 (NNTLVALPIVAIENILSFMSYDEISQLRLVCKRMDLVCQRMLNQGFLKV). Phosphoserine occurs at positions 235 and 242. Position 270 is a phosphothreonine (Thr-270). A disordered region spans residues 328-368 (MESAVGNSSGSGQNEESPRKRKKATEAIDSLRKSKRLRNRK). Residues 333 to 342 (GNSSGSGQNE) are compositionally biased toward low complexity. Phosphoserine is present on Ser-344.

Part of a SCF (SKP1-cullin-F-box) protein ligase complex.

The protein resides in the chromosome. Its subcellular location is the centromere. It is found in the kinetochore. In terms of biological role, probably recognizes and binds to some phosphorylated proteins and promotes their ubiquitination and degradation. This is F-box only protein 28 (FBXO28) from Homo sapiens (Human).